Consider the following 256-residue polypeptide: MSSSERVAKVVLVDIEGTTTSISFVHDVLFPYAKQNVEKFLRDSWEEDDIKRIVQDLQQVPQYADYKALLSGPPTEVDVDLIAGFVRYLIDQDLKVTPMKTLQGLIWAQGYANGELKGHVYEDVPAAFEAWRAAGLQIAVYSSGSVAAQKLIFGHSLAGNLQPYLSAYFDTHVGHKQEQQSYKNIAKQLKEDPKQILFLTDIPGEAAAARCAGLQAIILKRPGNAALADDQKTGFELIPDFKPLHNLKVPVNKSQA.

Mg(2+) contacts are provided by aspartate 14 and glutamate 16. Substrate-binding positions include 142 to 143 and lysine 176; that span reads SS. Aspartate 201 contacts Mg(2+).

This sequence belongs to the HAD-like hydrolase superfamily. MasA/MtnC family. As to quaternary structure, monomer. Mg(2+) serves as cofactor.

The protein localises to the cytoplasm. It is found in the nucleus. The catalysed reaction is 5-methylsulfanyl-2,3-dioxopentyl phosphate + H2O = 1,2-dihydroxy-5-(methylsulfanyl)pent-1-en-3-one + phosphate. Its pathway is amino-acid biosynthesis; L-methionine biosynthesis via salvage pathway; L-methionine from S-methyl-5-thio-alpha-D-ribose 1-phosphate: step 3/6. The protein operates within amino-acid biosynthesis; L-methionine biosynthesis via salvage pathway; L-methionine from S-methyl-5-thio-alpha-D-ribose 1-phosphate: step 4/6. Functionally, bifunctional enzyme that catalyzes the enolization of 2,3-diketo-5-methylthiopentyl-1-phosphate (DK-MTP-1-P) into the intermediate 2-hydroxy-3-keto-5-methylthiopentenyl-1-phosphate (HK-MTPenyl-1-P), which is then dephosphorylated to form the acireductone 1,2-dihydroxy-3-keto-5-methylthiopentene (DHK-MTPene). The polypeptide is Enolase-phosphatase E1 (Drosophila melanogaster (Fruit fly)).